Reading from the N-terminus, the 662-residue chain is p-hydroxybenzoic acid efflux pump subunit AaeB (662 aa).

The next 11 helical transmembrane spans lie at 22–42 (FAFK…HLQL), 52–72 (AAIV…SGAI), 76–96 (GMLR…IIIA), 102–122 (VVML…SSLV), 129–149 (VFGL…GTPL), 161–181 (EIVL…PRSI), 378–398 (LFWL…IAVV), 415–435 (FLFG…FIMP), 439–459 (QSML…GLEV), 467–487 (LGAL…TFHI), and 491–511 (LDSA…ILLI).

The protein belongs to the aromatic acid exporter ArAE (TC 2.A.85) family.

It localises to the cell inner membrane. In terms of biological role, forms an efflux pump with AaeA. Could function as a metabolic relief valve, allowing to eliminate certain compounds when they accumulate to high levels in the cell. This Pectobacterium carotovorum subsp. carotovorum (strain PC1) protein is p-hydroxybenzoic acid efflux pump subunit AaeB.